We begin with the raw amino-acid sequence, 230 residues long: Porin OmpL (230 aa).

Positions 1–20 (MKKINAIILLSSLTSASVFA) are cleaved as a signal peptide.

Belongs to the oligogalacturonate-specific porin KdgM (TC 1.B.35) family. OmpL subfamily.

The protein resides in the cell outer membrane. Functionally, outer membrane channel protein that allows an efficient diffusion of low-molecular-weight solutes such as small sugars and tetraglycine. However, the specific substrate recognized by the OmpL channel is unknown. The chain is Porin OmpL (ompL) from Escherichia coli (strain K12).